The chain runs to 184 residues: Cysteine-rich atrial secretory protein (184 aa).

Positions methionine 1–alanine 26 are cleaved as a signal peptide. 5 disulfide bridges follow: cysteine 29/cysteine 34, cysteine 65/cysteine 111, cysteine 75/cysteine 82, cysteine 123/cysteine 155, and cysteine 135/cysteine 144. Asparagine 74 carries an N-linked (GlcNAc...) asparagine glycan.

In terms of processing, N-glycosylated. In terms of tissue distribution, highly expressed in atrium. Moderately expressed in the pericardium, pulmonary vein, nephridium, arteria anterior, ovotestis and connective tissue. Low expression found in intestine, lung plexus, diaphragm, subesophageal ganglion, ventricle and digestive gland. Very low expression found in columellar retractor, pedal nerves and cerebral ganglion. Not expressed in hemocytes.

The protein resides in the secreted. This chain is Cysteine-rich atrial secretory protein, found in Achatina achatina (Giant Ghana snail).